Consider the following 579-residue polypeptide: Mycobactin import ATP-binding/permease protein IrtB (579 aa).

The Cytoplasmic portion of the chain corresponds to 1–25 (MIRTLLRLVPAEKRGAVAGYAVLTL). The ABC transmembrane type-1 domain maps to 21 to 299 (AVLTLLSVLL…IADLAPALET (279 aa)). A helical membrane pass occupies residues 26–46 (LSVLLRAVGAVLLIPLLAALF). The Periplasmic segment spans residues 47 to 48 (SD). Residues 49–69 (TPSDAWLWLGWLTAVTLAGWV) form a helical membrane-spanning segment. At 70 to 126 (TDTNTARLGFDLGFAVLSRTQHDMADRLPNVAMSWFTPDNTATARQAIAATGPELAG) the chain is on the cytoplasmic side. Transmembrane regions (helical) follow at residues 127–147 (LVVNLLTPLIGAALLPAAIGV) and 148–168 (ALLFVSVPLGLAALAGVAVLF). Topologically, residues 169–241 (GALALSGRLS…RLLTMQIPGQ (73 aa)) are cytoplasmic. A helical membrane pass occupies residues 242-262 (VLFSLAGQVALIGFAGMAVWL). Residues 263–272 (TVRGQLGVPE) lie on the Periplasmic side of the membrane. Residues 273 to 293 (AIALIVVLVRYLEPFAAIADL) form a helical membrane-spanning segment. Topologically, residues 294 to 579 (APALETTRAT…SEWAIGSTAR (286 aa)) are cytoplasmic. Positions 332-565 (IEFDDVRFSY…GGRFAQFWAQ (234 aa)) constitute an ABC transporter domain. 364 to 371 (GPSGSGKT) contacts ATP.

It belongs to the ABC transporter superfamily. Siderophore-Fe(3+) uptake transporter (SIUT) (TC 3.A.1.21) family. In terms of assembly, forms a heterodimer with IrtA.

It is found in the cell inner membrane. Its activity is regulated as follows. The ATPase activity of IrtAB is stimulated more than 38-fold in the presence of Fe-MBT, and more than 10-fold in the presence of Fe-cMBT. Part of the ABC transporter complex IrtAB involved in the import of iron-bound mycobactin (Fe-MBT) and carboxymycobactin (Fe-cMBT). Has a preference for Fe-MBT over Fe-cMBT. Transmembrane domains (TMD) form a pore in the membrane and the ATP-binding domain (NBD) is responsible for energy generation. This Mycolicibacterium thermoresistibile (strain ATCC 19527 / DSM 44167 / CIP 105390 / JCM 6362 / NCTC 10409 / 316) (Mycobacterium thermoresistibile) protein is Mycobactin import ATP-binding/permease protein IrtB.